We begin with the raw amino-acid sequence, 161 residues long: Probable endopeptidase HI_1314 (161 aa).

The first 18 residues, 1–18 (MKVYKSFLIATASLFLFA), serve as a signal peptide directing secretion. Cys-19 carries N-palmitoyl cysteine lipidation. A lipid anchor (S-diacylglycerol cysteine) is attached at Cys-19. Residues 39 to 161 (IMAIAMLSEQ…SKAFWQVRRI (123 aa)) form the NlpC/P60 domain. The active-site Nucleophile is Cys-69. His-122 acts as the Proton acceptor in catalysis. His-134 is an active-site residue.

It belongs to the peptidase C40 family.

The protein resides in the cell membrane. The protein is Probable endopeptidase HI_1314 of Haemophilus influenzae (strain ATCC 51907 / DSM 11121 / KW20 / Rd).